A 214-amino-acid polypeptide reads, in one-letter code: Adenylate kinase (214 aa).

10–15 (GAGKGT) is an ATP binding site. The segment at 30–59 (STGDMLRAAIKAGTELGKQAKTLMDAGQLV) is NMP. Residues Thr31, Arg36, 57–59 (QLV), 85–88 (GFPR), and Gln92 each bind AMP. Residues 122 to 159 (GRRVHPASGRSYHVVYNPPKVEGKDDVTGEDLIIRADD) form an LID region. ATP-binding positions include Arg123 and 132–133 (SY). Residues Arg156 and Arg167 each coordinate AMP. Gln200 serves as a coordination point for ATP.

The protein belongs to the adenylate kinase family. As to quaternary structure, monomer.

The protein resides in the cytoplasm. The enzyme catalyses AMP + ATP = 2 ADP. Its pathway is purine metabolism; AMP biosynthesis via salvage pathway; AMP from ADP: step 1/1. In terms of biological role, catalyzes the reversible transfer of the terminal phosphate group between ATP and AMP. Plays an important role in cellular energy homeostasis and in adenine nucleotide metabolism. This Actinobacillus succinogenes (strain ATCC 55618 / DSM 22257 / CCUG 43843 / 130Z) protein is Adenylate kinase.